The following is a 425-amino-acid chain: Tyrosine--tRNA ligase (425 aa).

Tyr-37 is an L-tyrosine binding site. Positions 42-51 (PTADSLHLGH) match the 'HIGH' region motif. L-tyrosine is bound by residues Tyr-175 and Gln-179. The short motif at 235-239 (KFGKT) is the 'KMSKS' region element. Position 238 (Lys-238) interacts with ATP. Positions 357–414 (ADLQQALVSAELVPSRGQARTMISSNAVTINGEKQADPEYTFSASDRLFDRYTLLRRG) constitute an S4 RNA-binding domain.

The protein belongs to the class-I aminoacyl-tRNA synthetase family. TyrS type 1 subfamily. As to quaternary structure, homodimer.

The protein localises to the cytoplasm. The enzyme catalyses tRNA(Tyr) + L-tyrosine + ATP = L-tyrosyl-tRNA(Tyr) + AMP + diphosphate + H(+). Its function is as follows. Catalyzes the attachment of tyrosine to tRNA(Tyr) in a two-step reaction: tyrosine is first activated by ATP to form Tyr-AMP and then transferred to the acceptor end of tRNA(Tyr). This is Tyrosine--tRNA ligase from Pectobacterium carotovorum subsp. carotovorum (strain PC1).